The chain runs to 857 residues: uncharacterized protein (857 aa).

This is an uncharacterized protein from Bacillus subtilis (strain 168).